The primary structure comprises 156 residues: Cyanate hydratase (156 aa).

Catalysis depends on residues Arg96, Glu99, and Ser122.

The protein belongs to the cyanase family.

It catalyses the reaction cyanate + hydrogencarbonate + 3 H(+) = NH4(+) + 2 CO2. Its function is as follows. Catalyzes the reaction of cyanate with bicarbonate to produce ammonia and carbon dioxide. The protein is Cyanate hydratase of Escherichia coli O7:K1 (strain IAI39 / ExPEC).